A 310-amino-acid chain; its full sequence is L-lactate dehydrogenase (310 aa).

NAD(+) is bound by residues V11, D32, Y62, and 76 to 77 (GV). Substrate is bound by residues Q79, R85, and 117-120 (NPVD). NAD(+) contacts are provided by residues 115-117 (ASN) and S140. 145–148 (DTAR) contributes to the substrate binding site. Residues R150 and H165 each coordinate beta-D-fructose 1,6-bisphosphate. H172 acts as the Proton acceptor in catalysis. Residue T227 participates in substrate binding.

Belongs to the LDH/MDH superfamily. LDH family. As to quaternary structure, homotetramer.

The protein localises to the cytoplasm. The enzyme catalyses (S)-lactate + NAD(+) = pyruvate + NADH + H(+). It functions in the pathway fermentation; pyruvate fermentation to lactate; (S)-lactate from pyruvate: step 1/1. With respect to regulation, allosterically activated by fructose 1,6-bisphosphate (FBP). Its function is as follows. Catalyzes the conversion of lactate to pyruvate. The protein is L-lactate dehydrogenase of Allorhizobium ampelinum (strain ATCC BAA-846 / DSM 112012 / S4) (Agrobacterium vitis (strain S4)).